Here is a 151-residue protein sequence, read N- to C-terminus: SsrA-binding protein (151 aa).

Belongs to the SmpB family.

It is found in the cytoplasm. Functionally, required for rescue of stalled ribosomes mediated by trans-translation. Binds to transfer-messenger RNA (tmRNA), required for stable association of tmRNA with ribosomes. tmRNA and SmpB together mimic tRNA shape, replacing the anticodon stem-loop with SmpB. tmRNA is encoded by the ssrA gene; the 2 termini fold to resemble tRNA(Ala) and it encodes a 'tag peptide', a short internal open reading frame. During trans-translation Ala-aminoacylated tmRNA acts like a tRNA, entering the A-site of stalled ribosomes, displacing the stalled mRNA. The ribosome then switches to translate the ORF on the tmRNA; the nascent peptide is terminated with the 'tag peptide' encoded by the tmRNA and targeted for degradation. The ribosome is freed to recommence translation, which seems to be the essential function of trans-translation. The sequence is that of SsrA-binding protein from Chlamydia muridarum (strain MoPn / Nigg).